Here is an 89-residue protein sequence, read N- to C-terminus: uncharacterized protein (89 aa).

This is an uncharacterized protein from Klebsiella aerogenes (Enterobacter aerogenes).